The sequence spans 502 residues: Pentatricopeptide repeat-containing protein At4g01990, mitochondrial (502 aa).

Residues 1-13 constitute a mitochondrion transit peptide; sequence MMHSVSRLARRFC. PPR repeat units follow at residues 139–173, 174–208, 209–243, 245–275, 280–310, 315–345, and 350–381; these read NQST…NHVS, NSLP…SITP, CDIT…GEGI, SWNT…LENN, VRDC…LKKR, NNSS…WEST, and DMRM…MKKC.

Belongs to the PPR family. P subfamily.

The protein localises to the mitochondrion. This chain is Pentatricopeptide repeat-containing protein At4g01990, mitochondrial, found in Arabidopsis thaliana (Mouse-ear cress).